The primary structure comprises 94 residues: Large ribosomal subunit protein bL25 (94 aa).

This sequence belongs to the bacterial ribosomal protein bL25 family. Part of the 50S ribosomal subunit; part of the 5S rRNA/L5/L18/L25 subcomplex. Contacts the 5S rRNA. Binds to the 5S rRNA independently of L5 and L18.

In terms of biological role, this is one of the proteins that binds to the 5S RNA in the ribosome where it forms part of the central protuberance. This is Large ribosomal subunit protein bL25 from Sodalis glossinidius (strain morsitans).